Consider the following 60-residue polypeptide: Small, acid-soluble spore protein 1 (60 aa).

It belongs to the alpha/beta-type SASP family. SASP are degraded in the first minutes of spore germination and provide amino acids for both new protein synthesis and metabolism.

In terms of biological role, SASP are bound to spore DNA. They are double-stranded DNA-binding proteins that cause DNA to change to an a-like conformation. They protect the DNA backbone from chemical and enzymatic cleavage and are thus involved in dormant spore's high resistance to UV light. The protein is Small, acid-soluble spore protein 1 (ssp1) of Clostridium perfringens (strain 13 / Type A).